The primary structure comprises 754 residues: Glutathione biosynthesis bifunctional protein GshAB (754 aa).

The segment at 1–333 is glutamate--cysteine ligase; it reads MHINQLLQHA…KAQKLNDKIA (333 aa). In terms of domain architecture, ATP-grasp spans 489 to 752; the sequence is KKILRENGYP…LAKLFPEIST (264 aa). 516–574 contributes to the ATP binding site; the sequence is SQIKNKPIVVKPKTTNFGLGISIFETAASHNDYEKALDIAFIEDYSVLVEEFIPGTEYR. 3 residues coordinate Mg(2+): Asp-696, Glu-717, and Asn-719. Asp-696, Glu-717, and Asn-719 together coordinate Mn(2+).

The protein in the N-terminal section; belongs to the glutamate--cysteine ligase type 1 family. Type 2 subfamily. In terms of assembly, monomer. Mg(2+) is required as a cofactor. Requires Mn(2+) as cofactor.

It catalyses the reaction L-cysteine + L-glutamate + ATP = gamma-L-glutamyl-L-cysteine + ADP + phosphate + H(+). The catalysed reaction is gamma-L-glutamyl-L-cysteine + glycine + ATP = glutathione + ADP + phosphate + H(+). It participates in sulfur metabolism; glutathione biosynthesis; glutathione from L-cysteine and L-glutamate: step 1/2. Its pathway is sulfur metabolism; glutathione biosynthesis; glutathione from L-cysteine and L-glutamate: step 2/2. Its function is as follows. Synthesizes glutathione from L-glutamate and L-cysteine via gamma-L-glutamyl-L-cysteine. This is Glutathione biosynthesis bifunctional protein GshAB from Streptococcus mutans serotype c (strain ATCC 700610 / UA159).